Consider the following 92-residue polypeptide: Small ribosomal subunit protein uS19 (92 aa).

This sequence belongs to the universal ribosomal protein uS19 family.

Its function is as follows. Protein S19 forms a complex with S13 that binds strongly to the 16S ribosomal RNA. The polypeptide is Small ribosomal subunit protein uS19 (rpsS) (Rickettsia prowazekii (strain Madrid E)).